The sequence spans 220 residues: Metalloproteinase inhibitor 2 (220 aa).

An N-terminal signal peptide occupies residues 1-26; it reads MGAAARSLPLAFCLLLLGTLLPRADA. Cys27 is a binding site for Zn(2+). Positions 27–30 are involved in metalloproteinase-binding; the sequence is CSCS. 6 disulfides stabilise this stretch: Cys27/Cys98, Cys29/Cys127, Cys39/Cys152, Cys154/Cys201, Cys159/Cys164, and Cys172/Cys193. An NTR domain is found at 27–152; it reads CSCSPVHPQQ…SLNHRYQMGC (126 aa).

The protein belongs to the protease inhibitor I35 (TIMP) family. As to quaternary structure, interacts (via the C-terminal) with MMP2 (via the C-terminal PEX domain); the interaction inhibits the MMP2 activity. Post-translationally, the activity of TIMP2 is dependent on the presence of disulfide bonds.

The protein localises to the secreted. Complexes with metalloproteinases (such as collagenases) and irreversibly inactivates them by binding to their catalytic zinc cofactor. This Bos taurus (Bovine) protein is Metalloproteinase inhibitor 2 (TIMP2).